Consider the following 191-residue polypeptide: Ribosomal RNA small subunit methyltransferase G (191 aa).

Residues Gly-62, Phe-67, 111 to 112 (IE), and Arg-124 contribute to the S-adenosyl-L-methionine site.

It belongs to the methyltransferase superfamily. RNA methyltransferase RsmG family.

Its subcellular location is the cytoplasm. The catalysed reaction is guanosine(527) in 16S rRNA + S-adenosyl-L-methionine = N(7)-methylguanosine(527) in 16S rRNA + S-adenosyl-L-homocysteine. Functionally, specifically methylates the N7 position of guanine in position 527 of 16S rRNA. The sequence is that of Ribosomal RNA small subunit methyltransferase G from Rickettsia akari (strain Hartford).